Consider the following 374-residue polypeptide: Chaperone protein DnaJ (374 aa).

The J domain occupies 5-69; that stretch reads DYYEVLGVSK…DKKAKYDQFG (65 aa). A CR-type zinc finger spans residues 141–223; it reads GVNKKTILNL…CHGKGVESKR (83 aa). Cys-154, Cys-157, Cys-171, Cys-174, Cys-197, Cys-200, Cys-211, and Cys-214 together coordinate Zn(2+). 4 CXXCXGXG motif repeats span residues 154–161, 171–178, 197–204, and 211–218; these read CTKCDGVG, CTKCNGAG, CDKCNGVG, and CKNCHGKG.

The protein belongs to the DnaJ family. In terms of assembly, homodimer. Requires Zn(2+) as cofactor.

It localises to the cytoplasm. Functionally, participates actively in the response to hyperosmotic and heat shock by preventing the aggregation of stress-denatured proteins and by disaggregating proteins, also in an autonomous, DnaK-independent fashion. Unfolded proteins bind initially to DnaJ; upon interaction with the DnaJ-bound protein, DnaK hydrolyzes its bound ATP, resulting in the formation of a stable complex. GrpE releases ADP from DnaK; ATP binding to DnaK triggers the release of the substrate protein, thus completing the reaction cycle. Several rounds of ATP-dependent interactions between DnaJ, DnaK and GrpE are required for fully efficient folding. Also involved, together with DnaK and GrpE, in the DNA replication of plasmids through activation of initiation proteins. This is Chaperone protein DnaJ from Mesoplasma florum (strain ATCC 33453 / NBRC 100688 / NCTC 11704 / L1) (Acholeplasma florum).